Consider the following 98-residue polypeptide: Large ribosomal subunit protein uL23 (98 aa).

Belongs to the universal ribosomal protein uL23 family. In terms of assembly, part of the 50S ribosomal subunit. Contacts protein L29, and trigger factor when it is bound to the ribosome.

Functionally, one of the early assembly proteins it binds 23S rRNA. One of the proteins that surrounds the polypeptide exit tunnel on the outside of the ribosome. Forms the main docking site for trigger factor binding to the ribosome. This chain is Large ribosomal subunit protein uL23, found in Rickettsia prowazekii (strain Madrid E).